A 724-amino-acid polypeptide reads, in one-letter code: Phosphoribosylformylglycinamidine synthase subunit PurL (724 aa).

Residue histidine 46 is part of the active site. ATP is bound by residues tyrosine 49 and lysine 88. Glutamate 90 lines the Mg(2+) pocket. Substrate is bound by residues 91 to 94 and arginine 113; that span reads SHNH. The active-site Proton acceptor is the histidine 92. Residue aspartate 114 participates in Mg(2+) binding. Glutamine 237 is a substrate binding site. Position 265 (aspartate 265) interacts with Mg(2+). 309 to 311 is a binding site for substrate; sequence ESQ. 2 residues coordinate ATP: aspartate 489 and glycine 526. Asparagine 527 is a Mg(2+) binding site. Serine 529 lines the substrate pocket.

It belongs to the FGAMS family. As to quaternary structure, monomer. Part of the FGAM synthase complex composed of 1 PurL, 1 PurQ and 2 PurS subunits.

The protein localises to the cytoplasm. It catalyses the reaction N(2)-formyl-N(1)-(5-phospho-beta-D-ribosyl)glycinamide + L-glutamine + ATP + H2O = 2-formamido-N(1)-(5-O-phospho-beta-D-ribosyl)acetamidine + L-glutamate + ADP + phosphate + H(+). It functions in the pathway purine metabolism; IMP biosynthesis via de novo pathway; 5-amino-1-(5-phospho-D-ribosyl)imidazole from N(2)-formyl-N(1)-(5-phospho-D-ribosyl)glycinamide: step 1/2. In terms of biological role, part of the phosphoribosylformylglycinamidine synthase complex involved in the purines biosynthetic pathway. Catalyzes the ATP-dependent conversion of formylglycinamide ribonucleotide (FGAR) and glutamine to yield formylglycinamidine ribonucleotide (FGAM) and glutamate. The FGAM synthase complex is composed of three subunits. PurQ produces an ammonia molecule by converting glutamine to glutamate. PurL transfers the ammonia molecule to FGAR to form FGAM in an ATP-dependent manner. PurS interacts with PurQ and PurL and is thought to assist in the transfer of the ammonia molecule from PurQ to PurL. In Granulibacter bethesdensis (strain ATCC BAA-1260 / CGDNIH1), this protein is Phosphoribosylformylglycinamidine synthase subunit PurL.